A 327-amino-acid chain; its full sequence is DNA-directed RNA polymerase subunit alpha (327 aa).

An alpha N-terminal domain (alpha-NTD) region spans residues 1–233 (MQGSVTEFLK…EQLEAFVDLR (233 aa)). The segment at 247–327 (FDPVLLRPVD…NWPPLGFIDK (81 aa)) is alpha C-terminal domain (alpha-CTD).

It belongs to the RNA polymerase alpha chain family. As to quaternary structure, homodimer. The RNAP catalytic core consists of 2 alpha, 1 beta, 1 beta' and 1 omega subunit. When a sigma factor is associated with the core the holoenzyme is formed, which can initiate transcription.

The catalysed reaction is RNA(n) + a ribonucleoside 5'-triphosphate = RNA(n+1) + diphosphate. Functionally, DNA-dependent RNA polymerase catalyzes the transcription of DNA into RNA using the four ribonucleoside triphosphates as substrates. The sequence is that of DNA-directed RNA polymerase subunit alpha from Baumannia cicadellinicola subsp. Homalodisca coagulata.